The chain runs to 305 residues: Cell division control protein 2 homolog C (305 aa).

The Protein kinase domain maps to 4–297 (YEKLEKVGEG…AKAALDHPYF (294 aa)). ATP is bound by residues 10 to 18 (VGEGTYGKV) and Lys33. Phosphothreonine is present on Thr14. Tyr15 carries the post-translational modification Phosphotyrosine. Catalysis depends on Asp138, which acts as the Proton acceptor. Thr172 carries the phosphothreonine; by CAK modification.

It belongs to the protein kinase superfamily. CMGC Ser/Thr protein kinase family. CDC2/CDKX subfamily.

It carries out the reaction L-seryl-[protein] + ATP = O-phospho-L-seryl-[protein] + ADP + H(+). The catalysed reaction is L-threonyl-[protein] + ATP = O-phospho-L-threonyl-[protein] + ADP + H(+). The enzyme catalyses [DNA-directed RNA polymerase] + ATP = phospho-[DNA-directed RNA polymerase] + ADP + H(+). Functionally, plays a key role in the control of the eukaryotic cell cycle. In Antirrhinum majus (Garden snapdragon), this protein is Cell division control protein 2 homolog C (CDC2C).